Consider the following 183-residue polypeptide: MKNVTHSFVFLAHWPSAGSFGLNTDILATNLINLTVVVGVLIFFGKGVLKDLLDNRKQRILSTIRNSEELRRGTFEQLEKARIRLQKVELEADEYRMNGYSEIEREKENLINATSISLEQLEKSKNETLYFEKQRAMNQVRQRVFQQAVQGALGTLNSCLNTELHFRTIRANIGILGSMEWKR.

A helical membrane pass occupies residues 27–49 (LATNLINLTVVVGVLIFFGKGVL).

The protein belongs to the ATPase B chain family. F-type ATPases have 2 components, F(1) - the catalytic core - and F(0) - the membrane proton channel. F(1) has five subunits: alpha(3), beta(3), gamma(1), delta(1), epsilon(1). F(0) has four main subunits: a(1), b(1), b'(1) and c(10-14). The alpha and beta chains form an alternating ring which encloses part of the gamma chain. F(1) is attached to F(0) by a central stalk formed by the gamma and epsilon chains, while a peripheral stalk is formed by the delta, b and b' chains.

The protein resides in the plastid. It is found in the chloroplast thylakoid membrane. Its function is as follows. F(1)F(0) ATP synthase produces ATP from ADP in the presence of a proton or sodium gradient. F-type ATPases consist of two structural domains, F(1) containing the extramembraneous catalytic core and F(0) containing the membrane proton channel, linked together by a central stalk and a peripheral stalk. During catalysis, ATP synthesis in the catalytic domain of F(1) is coupled via a rotary mechanism of the central stalk subunits to proton translocation. Functionally, component of the F(0) channel, it forms part of the peripheral stalk, linking F(1) to F(0). The polypeptide is ATP synthase subunit b, chloroplastic (Brachypodium distachyon (Purple false brome)).